Consider the following 513-residue polypeptide: ATP synthase subunit alpha (513 aa).

169 to 176 (GDRQIGKT) contacts ATP.

It belongs to the ATPase alpha/beta chains family. In terms of assembly, F-type ATPases have 2 components, CF(1) - the catalytic core - and CF(0) - the membrane proton channel. CF(1) has five subunits: alpha(3), beta(3), gamma(1), delta(1), epsilon(1). CF(0) has three main subunits: a(1), b(2) and c(9-12). The alpha and beta chains form an alternating ring which encloses part of the gamma chain. CF(1) is attached to CF(0) by a central stalk formed by the gamma and epsilon chains, while a peripheral stalk is formed by the delta and b chains.

Its subcellular location is the cell inner membrane. It carries out the reaction ATP + H2O + 4 H(+)(in) = ADP + phosphate + 5 H(+)(out). In terms of biological role, produces ATP from ADP in the presence of a proton gradient across the membrane. The alpha chain is a regulatory subunit. The sequence is that of ATP synthase subunit alpha from Shewanella sediminis (strain HAW-EB3).